Consider the following 148-residue polypeptide: Urease accessory protein UreE (148 aa).

It belongs to the UreE family.

It is found in the cytoplasm. Functionally, involved in urease metallocenter assembly. Binds nickel. Probably functions as a nickel donor during metallocenter assembly. The protein is Urease accessory protein UreE of Nostoc punctiforme (strain ATCC 29133 / PCC 73102).